Consider the following 190-residue polypeptide: Abscisic acid receptor PYL2 (190 aa).

Positions 28-182 (FEPDPTTCTS…NLQKLGVAAT (155 aa)) are START-like. Abscisate is bound by residues Lys64, 93 to 98 (ASTSTE), 120 to 126 (RLKNYKS), and Glu147. The Gate loop signature appears at 89–93 (SGLPA). A Latch loop motif is present at residues 119 to 121 (HRL).

It belongs to the PYR/PYL/RCAR abscisic acid intracellular receptor family. As to quaternary structure, homodimer. Binds ABA on one subunit only. Interacts with HAB1, ABI1 and ABI2, and possibly with other PP2Cs. Binds to CARs protein in an ABA-independent manner, both at the plasma membrane and in the nucleus.

The protein localises to the cytoplasm. It localises to the nucleus. The protein resides in the cell membrane. In terms of biological role, receptor for abscisic acid (ABA) required for ABA-mediated responses such as stomatal closure and germination inhibition. Inhibits the activity of group-A protein phosphatases type 2C (PP2Cs) when activated by ABA. Can be activated by both (-)-ABA and (+)-ABA. The polypeptide is Abscisic acid receptor PYL2 (PYL2) (Arabidopsis thaliana (Mouse-ear cress)).